Here is an 859-residue protein sequence, read N- to C-terminus: MQEQYNPSEIEALVQKHWHDNKTFEVTEDANKEKFYCLSMFPYPSGRLHMGHVRNYTIGDVVARFQRLQGKNVLQPIGWDSFGLPAENAAINNKTAPAPWTYQNIEYMKNQLKLLGFGYDWSREIATCTPEYYRWEQWFFTKLYEKGLVYKKTASVNWCPNDETVLANEQVQDGCCWRCDTPVEQKEIPQWFIKITAYAEELLNDIDTLDGWPEQVKTMQRNWIGRSEGVEMTFGVAGSDKSFDIYTTRPDTLMGVTYVAIAAGHPLAELAAQTNPELAQFIEECKNSTTSEADLATMEKRGVATGLYAIHPITGKQVPIWAANFVLMNYGTGAVMSVPGHDQRDYEFAKKYNLSIEAVIKPVDGELDISEAAYTEKGVLFNSGEFDGLDFDGAFNAIADKLVAEGKGKRQVNYRLRDWGVSRQRYWGAPIPMVTLADGTVIPTPEDQLPVILPEDVVMDGIQSPIKADKEWAKTQVNGQDALRETDTFDTFMESSWYYARYCSPQADQMLDPTKANYWLPVDQYIGGIEHACMHLLYFRFFHKLLRDAGLVNSNEPAKQLLTQGMVLADAFYYNNDKGARVWVSPLDVVTTEKDDKGRVTKAIDKDGNELVYTGMCKMSKSKNNGIDPQVMVEKYGADTVRLFMMFASPPELTLEWQESGVEGAHRFIKRLWKLASDYVAQDNSEALDVSKLTSEQKALRREVHKTIAKVTDDIGRRQMFNTAVAAVMELMNHLQKAPQTTGQDRAIIGEALTAVVRLLYPIIPHVSFTLWNELGNTNSIEDSQWPVVDESALVEDSKLIVVQVNGKVRAKITVAADADQASVEALGMADEQVIKYLDGVTVRKVIYVPGKLLSIVAN.

Residues 42–52 (PYPSGRLHMGH) carry the 'HIGH' region motif. The 'KMSKS' region motif lies at 618–622 (KMSKS). Lysine 621 serves as a coordination point for ATP.

It belongs to the class-I aminoacyl-tRNA synthetase family.

The protein resides in the cytoplasm. The catalysed reaction is tRNA(Leu) + L-leucine + ATP = L-leucyl-tRNA(Leu) + AMP + diphosphate. The polypeptide is Leucine--tRNA ligase (Shewanella sp. (strain MR-4)).